The sequence spans 181 residues: Protein canopy homolog 1 (181 aa).

A signal peptide spans 1-21 (MAILLHFGVLITAFLSSHVEG). In terms of domain architecture, Saposin B-type spans 25 to 177 (PILYCGACRA…EETGLCKEYL (153 aa)). Disulfide bonds link Cys29–Cys173, Cys32–Cys166, and Cys87–Cys139. The Prevents secretion from ER motif lies at 178-181 (HNEL).

It belongs to the canopy family.

It is found in the endoplasmic reticulum. Its function is as follows. Plays an role in early embryonic development. In Xenopus laevis (African clawed frog), this protein is Protein canopy homolog 1 (cnpy1).